Reading from the N-terminus, the 259-residue chain is tRNA (guanine-N(7)-)-methyltransferase (259 aa).

The tract at residues 1–73 is disordered; it reads MGHHGQMHAQ…GPAEDPDRPG (73 aa). S-adenosyl-L-methionine contacts are provided by E91, E116, N143, and D166. D166 is a catalytic residue. Substrate is bound by residues K170, D202, and 238 to 241; that span reads TKYE.

The protein belongs to the class I-like SAM-binding methyltransferase superfamily. TrmB family.

The enzyme catalyses guanosine(46) in tRNA + S-adenosyl-L-methionine = N(7)-methylguanosine(46) in tRNA + S-adenosyl-L-homocysteine. It functions in the pathway tRNA modification; N(7)-methylguanine-tRNA biosynthesis. Its function is as follows. Catalyzes the formation of N(7)-methylguanine at position 46 (m7G46) in tRNA. The chain is tRNA (guanine-N(7)-)-methyltransferase from Mycolicibacterium paratuberculosis (strain ATCC BAA-968 / K-10) (Mycobacterium paratuberculosis).